Reading from the N-terminus, the 345-residue chain is Phosphoribosylformylglycinamidine cyclo-ligase (345 aa).

Belongs to the AIR synthase family.

It is found in the cytoplasm. It catalyses the reaction 2-formamido-N(1)-(5-O-phospho-beta-D-ribosyl)acetamidine + ATP = 5-amino-1-(5-phospho-beta-D-ribosyl)imidazole + ADP + phosphate + H(+). It participates in purine metabolism; IMP biosynthesis via de novo pathway; 5-amino-1-(5-phospho-D-ribosyl)imidazole from N(2)-formyl-N(1)-(5-phospho-D-ribosyl)glycinamide: step 2/2. This Escherichia coli O45:K1 (strain S88 / ExPEC) protein is Phosphoribosylformylglycinamidine cyclo-ligase.